We begin with the raw amino-acid sequence, 664 residues long: Trifunctional UDP-glucose 4,6-dehydratase/UDP-4-keto-6-deoxy-D-glucose 3,5-epimerase/UDP-4-keto-L-rhamnose-reductase RHM3 (664 aa).

13 to 19 (GAAGFIA) provides a ligand contact to NAD(+). T132 lines the substrate pocket. D133 acts as the Proton donor in catalysis. Residues E134 and Y159 each act as proton acceptor in the active site. NADP(+) is bound at residue 386–392 (GKTGWLG).

This sequence in the N-terminal section; belongs to the NAD(P)-dependent epimerase/dehydratase family. dTDP-glucose dehydratase subfamily. In the C-terminal section; belongs to the dTDP-4-dehydrorhamnose reductase family. It depends on NAD(+) as a cofactor. The cofactor is NADP(+). Expressed in roots, stems, seedlings, and siliques. Lower expression in inflorescence tips, and leaves.

It catalyses the reaction UDP-alpha-D-glucose = UDP-4-dehydro-6-deoxy-alpha-D-glucose + H2O. It participates in carbohydrate biosynthesis. Trifunctional enzyme involved in UDP-beta-L-rhamnose biosynthesis, a precursor of the primary cell wall components rhamnogalacturonan I (RG-I) and rhamnogalacturonan II (RG-II). Catalyzes the dehydration of UDP-glucose to form UDP-4-dehydro-6-deoxy-D-glucose followed by the epimerization of the C3' and C5' positions of UDP-4-dehydro-6-deoxy-D-glucose to form UDP-4-keto-beta-L-rhamnose and the reduction of UDP-4-keto-beta-L-rhamnose to yield UDP-beta-L-rhamnose. In Arabidopsis thaliana (Mouse-ear cress), this protein is Trifunctional UDP-glucose 4,6-dehydratase/UDP-4-keto-6-deoxy-D-glucose 3,5-epimerase/UDP-4-keto-L-rhamnose-reductase RHM3.